Here is a 303-residue protein sequence, read N- to C-terminus: HTH-type transcriptional regulator CatM (303 aa).

One can recognise an HTH lysR-type domain in the interval Met1–Thr58. Residues Ile18 to Gln37 constitute a DNA-binding region (H-T-H motif). Ser99 and Thr128 together coordinate cis,cis-muconate.

The protein belongs to the LysR transcriptional regulatory family. As to quaternary structure, homotetramer in solution.

Functionally, positively regulates the expression of catA, catBCIJFD and benPK in response to cis,cis-muconate. It binds to the catB-catM intercistronic region, to a specific sequence upstream of catA and to the benPK promoter region. Can also repress pca genes. This Acinetobacter baylyi (strain ATCC 33305 / BD413 / ADP1) protein is HTH-type transcriptional regulator CatM (catM).